The following is a 450-amino-acid chain: tRNA-2-methylthio-N(6)-dimethylallyladenosine synthase (450 aa).

The region spanning 14-132 (GEFFIETWGC…FPNYLNEVKK (119 aa)) is the MTTase N-terminal domain. [4Fe-4S] cluster is bound by residues C23, C59, C93, C169, C173, and C176. In terms of domain architecture, Radical SAM core spans 155–385 (RKNSMKAFVT…VEVVNEISAK (231 aa)). Positions 388-450 (KAYEGKIEEV…NSFSLTGEEI (63 aa)) constitute a TRAM domain.

Belongs to the methylthiotransferase family. MiaB subfamily. In terms of assembly, monomer. Requires [4Fe-4S] cluster as cofactor.

Its subcellular location is the cytoplasm. It carries out the reaction N(6)-dimethylallyladenosine(37) in tRNA + (sulfur carrier)-SH + AH2 + 2 S-adenosyl-L-methionine = 2-methylsulfanyl-N(6)-dimethylallyladenosine(37) in tRNA + (sulfur carrier)-H + 5'-deoxyadenosine + L-methionine + A + S-adenosyl-L-homocysteine + 2 H(+). Catalyzes the methylthiolation of N6-(dimethylallyl)adenosine (i(6)A), leading to the formation of 2-methylthio-N6-(dimethylallyl)adenosine (ms(2)i(6)A) at position 37 in tRNAs that read codons beginning with uridine. In Clostridium botulinum (strain Loch Maree / Type A3), this protein is tRNA-2-methylthio-N(6)-dimethylallyladenosine synthase.